A 475-amino-acid polypeptide reads, in one-letter code: Ribulose bisphosphate carboxylase large chain (475 aa).

A propeptide spanning residues 1-2 (MS) is cleaved from the precursor. The residue at position 3 (proline 3) is an N-acetylproline. At lysine 14 the chain carries N6,N6,N6-trimethyllysine. 2 residues coordinate substrate: asparagine 123 and threonine 173. Residue lysine 175 is the Proton acceptor of the active site. Residue lysine 177 coordinates substrate. 3 residues coordinate Mg(2+): lysine 201, aspartate 203, and glutamate 204. Lysine 201 is subject to N6-carboxylysine. Histidine 294 serves as the catalytic Proton acceptor. 3 residues coordinate substrate: arginine 295, histidine 327, and serine 379.

This sequence belongs to the RuBisCO large chain family. Type I subfamily. In terms of assembly, heterohexadecamer of 8 large chains and 8 small chains; disulfide-linked. The disulfide link is formed within the large subunit homodimers. Requires Mg(2+) as cofactor. In terms of processing, the disulfide bond which can form in the large chain dimeric partners within the hexadecamer appears to be associated with oxidative stress and protein turnover.

Its subcellular location is the plastid. It localises to the chloroplast. The enzyme catalyses 2 (2R)-3-phosphoglycerate + 2 H(+) = D-ribulose 1,5-bisphosphate + CO2 + H2O. The catalysed reaction is D-ribulose 1,5-bisphosphate + O2 = 2-phosphoglycolate + (2R)-3-phosphoglycerate + 2 H(+). In terms of biological role, ruBisCO catalyzes two reactions: the carboxylation of D-ribulose 1,5-bisphosphate, the primary event in carbon dioxide fixation, as well as the oxidative fragmentation of the pentose substrate in the photorespiration process. Both reactions occur simultaneously and in competition at the same active site. The polypeptide is Ribulose bisphosphate carboxylase large chain (Atriplex rosea (Red orache)).